A 215-amino-acid chain; its full sequence is tRNA (guanine-N(7)-)-methyltransferase (215 aa).

S-adenosyl-L-methionine is bound by residues D43, E68, N95, and D121. Residue D121 is part of the active site. Residues K125 and D157 each contribute to the substrate site.

Belongs to the class I-like SAM-binding methyltransferase superfamily. TrmB family.

The enzyme catalyses guanosine(46) in tRNA + S-adenosyl-L-methionine = N(7)-methylguanosine(46) in tRNA + S-adenosyl-L-homocysteine. It functions in the pathway tRNA modification; N(7)-methylguanine-tRNA biosynthesis. Functionally, catalyzes the formation of N(7)-methylguanine at position 46 (m7G46) in tRNA. The protein is tRNA (guanine-N(7)-)-methyltransferase of Trichormus variabilis (strain ATCC 29413 / PCC 7937) (Anabaena variabilis).